Reading from the N-terminus, the 476-residue chain is 8-amino-7-oxononanoate synthase (476 aa).

Arg24 contacts substrate. Gly171–Phe172 contacts pyridoxal 5'-phosphate. Residue His210 participates in substrate binding. Residues Ser260, Asp285–His288, and Thr316–Lys319 contribute to the pyridoxal 5'-phosphate site. An N6-(pyridoxal phosphate)lysine modification is found at Lys319. A substrate-binding site is contributed by Thr427. A Peroxisomal targeting signal PTS1 motif is present at residues Pro474–Leu476.

It belongs to the class-II pyridoxal-phosphate-dependent aminotransferase family. BioF subfamily. In terms of assembly, monomer. Requires pyridoxal 5'-phosphate as cofactor.

The protein localises to the cytoplasm. It is found in the cytosol. The protein resides in the peroxisome. It catalyses the reaction 6-carboxyhexanoyl-[ACP] + L-alanine + H(+) = (8S)-8-amino-7-oxononanoate + holo-[ACP] + CO2. The protein operates within cofactor biosynthesis; biotin biosynthesis; 8-amino-7-oxononanoate from pimeloyl-CoA: step 1/1. Functionally, catalyzes the decarboxylative condensation of pimeloyl-[acyl-carrier protein] and L-alanine to produce 8-amino-7-oxononanoate (AON), [acyl-carrier protein], and carbon dioxide. Required for the biosynthesis of D-biotin that prevents light-mediated cell death and modulates defense gene expression, probably by avoiding hydrogen peroxide H(2)O(2) accumulation. The polypeptide is 8-amino-7-oxononanoate synthase (Arabidopsis thaliana (Mouse-ear cress)).